Consider the following 336-residue polypeptide: DNA topoisomerase 1B (336 aa).

In terms of domain architecture, Topo IB-type catalytic spans 79–336; sequence EIHIQGAEKE…KSYRKDVLGE (258 aa). Catalysis depends on tyrosine 294, which acts as the O-(3'-phospho-DNA)-tyrosine intermediate.

The protein belongs to the type IB topoisomerase family. As to quaternary structure, monomer.

It is found in the virion. It carries out the reaction ATP-independent breakage of single-stranded DNA, followed by passage and rejoining.. Releases the supercoiling and torsional tension of DNA introduced during the DNA replication and transcription by transiently cleaving and rejoining one strand of the DNA duplex. Introduces a single-strand break via transesterification at a target site in duplex DNA. The scissile phosphodiester is attacked by the catalytic tyrosine of the enzyme, resulting in the formation of a DNA-(3'-phosphotyrosyl)-enzyme intermediate and the expulsion of a 5'-OH DNA strand. The free DNA strand then undergoes passage around the unbroken strand thus removing DNA supercoils. Finally, in the religation step, the DNA 5'-OH attacks the covalent intermediate to expel the active-site tyrosine and restore the DNA phosphodiester backbone. Cleaves DNA after CCCTT sequence. The polypeptide is DNA topoisomerase 1B (TOP1E) (Acanthamoeba polyphaga mimivirus (APMV)).